The sequence spans 100 residues: NADH-quinone oxidoreductase subunit K 1 (100 aa).

Helical transmembrane passes span 4 to 24, 29 to 49, and 60 to 80; these read LNNY…GVLV, IVIF…FIAF, and IFVF…LALM.

It belongs to the complex I subunit 4L family. In terms of assembly, NDH-1 is composed of 14 different subunits. Subunits NuoA, H, J, K, L, M, N constitute the membrane sector of the complex.

It localises to the cell inner membrane. The enzyme catalyses a quinone + NADH + 5 H(+)(in) = a quinol + NAD(+) + 4 H(+)(out). In terms of biological role, NDH-1 shuttles electrons from NADH, via FMN and iron-sulfur (Fe-S) centers, to quinones in the respiratory chain. The immediate electron acceptor for the enzyme in this species is believed to be ubiquinone. Couples the redox reaction to proton translocation (for every two electrons transferred, four hydrogen ions are translocated across the cytoplasmic membrane), and thus conserves the redox energy in a proton gradient. In Geotalea daltonii (strain DSM 22248 / JCM 15807 / FRC-32) (Geobacter daltonii), this protein is NADH-quinone oxidoreductase subunit K 1.